Consider the following 359-residue polypeptide: Protein FLX-like 2 (359 aa).

Basic residues predominate over residues 1 to 16 (MESKGRIHPSHHHMRR). The segment at 1–27 (MESKGRIHPSHHHMRRPLPGPGGCIAH) is disordered. A coiled-coil region spans residues 83-236 (HGSLRQELAA…EKLQAQLMNN (154 aa)). A disordered region spans residues 303-359 (TQPGYFPQRPGYNFPRGPPGSYDPTTRLPTGPYGAPFPPGPSNNTPYAGTHGNPSRR).

It belongs to the FLX family. Interacts with FRI.

Functionally, has no transcriptional activation activity. This is Protein FLX-like 2 (FLXL2) from Arabidopsis thaliana (Mouse-ear cress).